The following is a 65-amino-acid chain: Large ribosomal subunit protein bL35 (65 aa).

Belongs to the bacterial ribosomal protein bL35 family.

This Aliarcobacter butzleri (strain RM4018) (Arcobacter butzleri) protein is Large ribosomal subunit protein bL35.